We begin with the raw amino-acid sequence, 330 residues long: G-protein coupled bile acid receptor 1 (330 aa).

Topologically, residues 1–19 (MTPNSTGEVPGPIPRGALE) are extracellular. N4 is a glycosylation site (N-linked (GlcNAc...) asparagine). The chain crosses the membrane as a helical span at residues 20 to 40 (LSLALASLIIAANLLLALGIA). Residues 41-50 (CDRRLRSPPA) lie on the Cytoplasmic side of the membrane. The chain crosses the membrane as a helical span at residues 51 to 71 (GCFFLSLLLAGLLTGLALPTL). Residues 72-85 (PGLWRQSHRGYWSC) are Extracellular-facing. A disulfide bridge links C85 with C155. A helical transmembrane segment spans residues 86 to 106 (LLVYLAPNFSFLSLLANLLLV). Residues 107-125 (HGERYVAVLRPLQPPGSIR) lie on the Cytoplasmic side of the membrane. The chain crosses the membrane as a helical span at residues 126–146 (LALLLTWTGPLLFASLPALGW). Over 147–169 (NHWGPEANCSSQTIFPAPYLYLE) the chain is Extracellular. N154 is a glycosylation site (N-linked (GlcNAc...) asparagine). The helical transmembrane segment at 170–190 (VYGLLLPAVGAAALLSAHVLL) threads the bilayer. The Cytoplasmic segment spans residues 191–230 (AAHRQLQDIRRLERAVCRDAPSALARALTWRQARAQAGAT). Residues 231–251 (LLFGLCWGPYVATLFLSVLAY) form a helical membrane-spanning segment. Topologically, residues 252-261 (EQRPPLGPGT) are extracellular. A helical membrane pass occupies residues 262–282 (LLSLLSLGSASAAAVPVAMGL). Residues 283-330 (GDHRYTAPWRAAARRWLRGLRGRGSQASPGPSTAYHTSSQSSVDVDLN) lie on the Cytoplasmic side of the membrane. A disordered region spans residues 304 to 330 (GRGSQASPGPSTAYHTSSQSSVDVDLN). Residues 307–330 (SQASPGPSTAYHTSSQSSVDVDLN) show a composition bias toward polar residues.

It belongs to the G-protein coupled receptor 1 family. As to expression, expressed at high level in spleen. Expressed at lower level in thymus, heart, lung, liver, kidney, ileum, blood and adherent alveolar macrophage cells.

It is found in the cell membrane. Receptor for bile acid. Bile-acid binding induces its internalization, activation of extracellular signal-regulated kinase and intracellular cAMP production. May be involved in the suppression of macrophage functions by bile acids. Involved in bile acid promoted GLP1R secretion. The chain is G-protein coupled bile acid receptor 1 (GPBAR1) from Oryctolagus cuniculus (Rabbit).